The chain runs to 214 residues: Thymidylate kinase (214 aa).

G10–T17 is an ATP binding site.

This sequence belongs to the thymidylate kinase family.

It carries out the reaction dTMP + ATP = dTDP + ADP. Phosphorylation of dTMP to form dTDP in both de novo and salvage pathways of dTTP synthesis. This Limosilactobacillus fermentum (strain NBRC 3956 / LMG 18251) (Lactobacillus fermentum) protein is Thymidylate kinase.